Consider the following 407-residue polypeptide: Arginine deiminase (407 aa).

Cys397 acts as the Amidino-cysteine intermediate in catalysis.

The protein belongs to the arginine deiminase family.

It is found in the cytoplasm. It catalyses the reaction L-arginine + H2O = L-citrulline + NH4(+). It functions in the pathway amino-acid degradation; L-arginine degradation via ADI pathway; carbamoyl phosphate from L-arginine: step 1/2. This is Arginine deiminase from Vibrio parahaemolyticus serotype O3:K6 (strain RIMD 2210633).